A 470-amino-acid chain; its full sequence is Membrane-bound lytic murein transglycosylase F (470 aa).

The first 21 residues, 1–21 (MLKEKLIIIITLVMLLCACDI), serve as a signal peptide directing secretion. The segment at 22–259 (QEQSTQLAQI…VLEEKYFGHV (238 aa)) is non-LT domain. Positions 260–470 (RQFNYVNTLA…PKIGDEVEAK (211 aa)) are LT domain. Residue glutamate 304 is part of the active site.

It in the N-terminal section; belongs to the bacterial solute-binding protein 3 family. This sequence in the C-terminal section; belongs to the transglycosylase Slt family.

It is found in the cell outer membrane. The enzyme catalyses Exolytic cleavage of the (1-&gt;4)-beta-glycosidic linkage between N-acetylmuramic acid (MurNAc) and N-acetylglucosamine (GlcNAc) residues in peptidoglycan, from either the reducing or the non-reducing ends of the peptidoglycan chains, with concomitant formation of a 1,6-anhydrobond in the MurNAc residue.. In terms of biological role, murein-degrading enzyme that degrades murein glycan strands and insoluble, high-molecular weight murein sacculi, with the concomitant formation of a 1,6-anhydromuramoyl product. Lytic transglycosylases (LTs) play an integral role in the metabolism of the peptidoglycan (PG) sacculus. Their lytic action creates space within the PG sacculus to allow for its expansion as well as for the insertion of various structures such as secretion systems and flagella. The chain is Membrane-bound lytic murein transglycosylase F from Pseudoalteromonas translucida (strain TAC 125).